A 266-amino-acid chain; its full sequence is uncharacterized protein (266 aa).

This is an uncharacterized protein from Acanthamoeba polyphaga (Amoeba).